Here is a 147-residue protein sequence, read N- to C-terminus: CLAVATA3/ESR (CLE)-related protein 4C (147 aa).

A signal peptide spans 1-21; the sequence is MATNTMLCLFVISVVLALAFA. The tract at residues 21–83 is required for secretion from the host cytoplasm to the host apoplasm; sequence ATNKKGDEEP…SNQLPNNNWM (63 aa). N-linked (GlcNAc...) asparagine glycosylation occurs at N32. Disordered regions lie at residues 57–86 and 116–147; these read GADATRGGGAVYGGNLKSNQLPNNNWMAPP and RKTGMHSQRHHEETTLEQEKRVAGAGPDPIHH. The segment covering 125 to 137 has biased composition (basic and acidic residues); it reads HHEETTLEQEKRV. A CLE motif is present at residues 136-147; it reads RVAGAGPDPIHH.

The protein belongs to the CLV3/ESR signal peptide family. In terms of tissue distribution, highly expressed exclusively within the dorsal esophageal gland cell during syncytium formation in host plants.

Its subcellular location is the secreted. It is found in the host cytoplasm. The protein localises to the host extracellular space. It localises to the extracellular space. The protein resides in the apoplast. In terms of biological role, mimics host plant CLE extracellular signal peptides that regulate cell fate. May play a role in the differentiation or division of feeding cells (syncytia) induced in plant roots during infection. The sequence is that of CLAVATA3/ESR (CLE)-related protein 4C (CLE-4C) from Globodera rostochiensis (Golden nematode worm).